Consider the following 723-residue polypeptide: MIYQAETLQVKEVQDGVAEILFCAQNSVNKLDLATLASLDKALDALTAHSGLKGVMLTSDKEAFIVGADITEFLGLFAKPEEELDQWLQFANSIFNKLEDLPVPTVAVVKGHTLGGGCECVLATDLRIGDKTTSIGLPETKLGIMPGFGGCVRLPRVIGADSAMEIITQGKACRAEEALKIGLLDAVVDSDRLYASALQTLTDAINEKIDWKARRQQKTSALTLSKLEAMMSFTMAKGLVAQVAGPHYPAPMTAVVTIEEGARFARNQALDIERKHFVKLAKSEEAKALVGLFLNDQYIKGIAKKAAKSANKETQRAAVLGAGIMGGGIAYQSALKGVPVIMKDIAQASLDLGMTEASKLLNKQLERGKIDGFKMAGILASITPSLHYAGIDNADIIVEAVVENPKVKAAVLSEVEEQVSEETVLTSNTSTIPINLLAKSLKRPENFCGMHFFNPVHRMPLVEIIRGEHTSDETINRVVAYAAKMGKSPIVVNDCPGFFVNRVLFPYFGGFSMLLRDGADFTQIDKVMERKFGWPMGPAYLLDVVGIDTAHHAQAVMAQGFPERMGKQGRDAIDALFEANKYGQKNGSGFYTYTMDKKGKPKKAFSDEIVPILAPVCAAQQAFDDQTIIQRMMIPMINEVVLCLQEGIIASAQEADMALVYGLGFPPFRGGVFRYLDSVGIANFVAMAQQHVELGAMYQVPQMLIDMAERGQTFYGAQQQGSI.

The segment at 1-189 (MIYQAETLQV…KIGLLDAVVD (189 aa)) is enoyl-CoA hydratase/isomerase. Asp296 provides a ligand contact to substrate. The 3-hydroxyacyl-CoA dehydrogenase stretch occupies residues 311-723 (NKETQRAAVL…FYGAQQQGSI (413 aa)). NAD(+) contacts are provided by residues Met325, Asp344, 401–403 (VVE), Lys408, and Ser430. Residue His451 is the For 3-hydroxyacyl-CoA dehydrogenase activity of the active site. Asn454 provides a ligand contact to NAD(+). Substrate is bound by residues Asn501 and Tyr661.

It in the N-terminal section; belongs to the enoyl-CoA hydratase/isomerase family. In the C-terminal section; belongs to the 3-hydroxyacyl-CoA dehydrogenase family. As to quaternary structure, heterotetramer of two alpha chains (FadB) and two beta chains (FadA).

It catalyses the reaction a (3S)-3-hydroxyacyl-CoA + NAD(+) = a 3-oxoacyl-CoA + NADH + H(+). The catalysed reaction is a (3S)-3-hydroxyacyl-CoA = a (2E)-enoyl-CoA + H2O. It carries out the reaction a 4-saturated-(3S)-3-hydroxyacyl-CoA = a (3E)-enoyl-CoA + H2O. The enzyme catalyses (3S)-3-hydroxybutanoyl-CoA = (3R)-3-hydroxybutanoyl-CoA. It catalyses the reaction a (3Z)-enoyl-CoA = a 4-saturated (2E)-enoyl-CoA. The catalysed reaction is a (3E)-enoyl-CoA = a 4-saturated (2E)-enoyl-CoA. It functions in the pathway lipid metabolism; fatty acid beta-oxidation. Functionally, involved in the aerobic and anaerobic degradation of long-chain fatty acids via beta-oxidation cycle. Catalyzes the formation of 3-oxoacyl-CoA from enoyl-CoA via L-3-hydroxyacyl-CoA. It can also use D-3-hydroxyacyl-CoA and cis-3-enoyl-CoA as substrate. The polypeptide is Fatty acid oxidation complex subunit alpha (Vibrio vulnificus (strain YJ016)).